The sequence spans 451 residues: Probable D-serine dehydratase (451 aa).

The disordered stretch occupies residues 1 to 55; the sequence is MPGRTRPSCRLAITFTPRPDSATPRAGRAAPATGRRSNRSRSTLSATASPMPRRP. Residues 22 to 35 show a composition bias toward low complexity; that stretch reads ATPRAGRAAPATGR. N6-(pyridoxal phosphate)lysine is present on K118.

It belongs to the serine/threonine dehydratase family. DsdA subfamily. Requires pyridoxal 5'-phosphate as cofactor.

It catalyses the reaction D-serine = pyruvate + NH4(+). The chain is Probable D-serine dehydratase from Paracidovorax citrulli (strain AAC00-1) (Acidovorax citrulli).